A 266-amino-acid polypeptide reads, in one-letter code: Small ribosomal subunit protein eS1 (266 aa).

The interval 235 to 266 (GGAGGAAKASGDDTGAKVERADGYEPPIQETV) is disordered. Basic and acidic residues predominate over residues 244–257 (SGDDTGAKVERADG).

The protein belongs to the eukaryotic ribosomal protein eS1 family. Component of the small ribosomal subunit. Mature ribosomes consist of a small (40S) and a large (60S) subunit. The 40S subunit contains about 33 different proteins and 1 molecule of RNA (18S). The 60S subunit contains about 49 different proteins and 3 molecules of RNA (28S, 5.8S and 5S).

Its subcellular location is the cytoplasm. Its function is as follows. Component of the small ribosomal subunit. The ribosome is a large ribonucleoprotein complex responsible for the synthesis of proteins in the cell. The sequence is that of Small ribosomal subunit protein eS1 (rps3a) from Oryzias latipes (Japanese rice fish).